A 318-amino-acid polypeptide reads, in one-letter code: uncharacterized protein (318 aa).

A helical transmembrane segment spans residues 2–22 (ILELIIVLVLLVLAFKSLKIL). Residues 295–318 (SDPEDKGVSEVETESQPAEKPEKH) are disordered.

This sequence belongs to the band 7/mec-2 family.

The protein resides in the membrane. This is an uncharacterized protein from Methanothermobacter thermautotrophicus (strain ATCC 29096 / DSM 1053 / JCM 10044 / NBRC 100330 / Delta H) (Methanobacterium thermoautotrophicum).